Here is a 579-residue protein sequence, read N- to C-terminus: Moesin a (579 aa).

The FERM domain occupies 5 to 295; the sequence is ISVRVTTMDA…GNHELYMRRR (291 aa). Positions 306–448 form a coiled coil; it reads KAQAKEEKNH…EDEALEWQTK (143 aa). Disordered regions lie at residues 308 to 341, 376 to 418, and 464 to 519; these read QAKEEKNHKKMERALLEDERKKREQAEKEKEKIE, EQER…EHLA, and KNKV…KNER. The span at 376-400 shows a compositional bias: basic and acidic residues; that stretch reads EQERKRAQEEAERLERERRLAEEAK. Positions 490-501 are enriched in low complexity; sequence AEASAELTSAAA. The span at 502 to 519 shows a compositional bias: basic and acidic residues; the sequence is YKDRSEEERMTEAEKNER. Residues 517–551 are a coiled coil; it reads NERVQKHLLALTSELANARDETKKTQNDIIHAENV.

Its subcellular location is the cell membrane. It is found in the cell junction. In terms of biological role, positively regulates endothelial adherens junction formation and stabilization. Is thereby required for intersegmental vessel luminal membrane formation and stabilization during tubulogenesis in the early stages of development, independent of blood flow dynamics. This Danio rerio (Zebrafish) protein is Moesin a.